The chain runs to 287 residues: Ribonuclease Z (287 aa).

Residues His-64, His-66, Asp-68, His-69, His-124, Asp-191, and His-250 each coordinate Zn(2+). The active-site Proton acceptor is the Asp-68.

This sequence belongs to the RNase Z family. As to quaternary structure, homodimer. The cofactor is Zn(2+).

It catalyses the reaction Endonucleolytic cleavage of RNA, removing extra 3' nucleotides from tRNA precursor, generating 3' termini of tRNAs. A 3'-hydroxy group is left at the tRNA terminus and a 5'-phosphoryl group is left at the trailer molecule.. In terms of biological role, zinc phosphodiesterase, which displays some tRNA 3'-processing endonuclease activity. Probably involved in tRNA maturation, by removing a 3'-trailer from precursor tRNA. In Pyrobaculum calidifontis (strain DSM 21063 / JCM 11548 / VA1), this protein is Ribonuclease Z.